The primary structure comprises 681 residues: CAI-1 autoinducer sensor kinase/phosphatase CqsS (681 aa).

The next 4 helical transmembrane spans lie at 17–37 (LVGW…EFMF), 73–93 (AYYQ…MLLM), 112–132 (ILLV…IGLA), and 148–168 (MDWT…LFYF). The Histidine kinase domain maps to 187–413 (GIAHEMRNPL…QFTMTFPTIG (227 aa)). H190 is modified (phosphohistidine; by autocatalysis). Residues 564-681 (TIMVVDDNES…RLFDKIANWI (118 aa)) enclose the Response regulatory domain. D613 is subject to 4-aspartylphosphate.

It is found in the cell membrane. The enzyme catalyses ATP + protein L-histidine = ADP + protein N-phospho-L-histidine.. Functionally, senses the quorum-sensing autoinducer CAI-1 ((S)-3-hydroxytridecan-4-one) which probably functions as an intragenus signal. The sensory signal is then relayed to LuxU and LuxO. The sequence is that of CAI-1 autoinducer sensor kinase/phosphatase CqsS (cqsS) from Vibrio campbellii (strain ATCC BAA-1116).